Reading from the N-terminus, the 139-residue chain is Transcription antitermination protein NusB (139 aa).

Belongs to the NusB family.

Its function is as follows. Involved in transcription antitermination. Required for transcription of ribosomal RNA (rRNA) genes. Binds specifically to the boxA antiterminator sequence of the ribosomal RNA (rrn) operons. This is Transcription antitermination protein NusB from Edwardsiella ictaluri (strain 93-146).